Consider the following 99-residue polypeptide: MAVNPLDFLKNMSSVKSNIDNIKKEMSKITVCGKAGSNIVTIEMDGEFNVKKVSINKEFFDDLDNDAFEQMVKSALNDAVSKVKEEIKLKTMGVLPFGM.

The protein belongs to the YbaB/EbfC family. In terms of assembly, homodimer.

The protein localises to the cytoplasm. It localises to the nucleoid. Its function is as follows. Binds to DNA and alters its conformation. May be involved in regulation of gene expression, nucleoid organization and DNA protection. The chain is Nucleoid-associated protein EbfC from Borreliella afzelii (strain PKo) (Borrelia afzelii).